Here is a 501-residue protein sequence, read N- to C-terminus: Microtubule-associated protein mmb1 (501 aa).

3 stretches are compositionally biased toward polar residues: residues 61-95 (NISS…TNNV), 103-122 (RNPS…SNNA), and 132-168 (HENS…SSNA). 3 disordered regions span residues 61-274 (NISS…VKVN), 328-381 (VSRN…TTGN), and 478-501 (NQTS…NRMI). The segment covering 234 to 252 (SSVVRPPTRTSTTRPLSRV) has biased composition (low complexity). 3 stretches are compositionally biased toward polar residues: residues 253 to 274 (NVTN…VKVN), 367 to 381 (SRIQ…TTGN), and 478 to 495 (NQTS…SSPL).

Its subcellular location is the cytoplasm. The protein localises to the cytoskeleton. In terms of biological role, involved in the cell polarity process and in regulation of microtubule growth. Has a role in meiosis. Involved in microtubule dynamics. Binds to mitochondria and microtubules, attaching the tubular mitochondria to the microtubule lattice at multiple discrete interaction sites. The chain is Microtubule-associated protein mmb1 from Schizosaccharomyces pombe (strain 972 / ATCC 24843) (Fission yeast).